The sequence spans 884 residues: Translation initiation factor IF-2 (884 aa).

The segment at 93-288 (VNTPEAEQAK…KGKRKPSTLQ (196 aa)) is disordered. Residues 99–209 (EQAKAEEQAQ…KMAAENEGKW (111 aa)) show a composition bias toward basic and acidic residues. Residues 216 to 229 (QTESADYHVTTSQH) show a composition bias toward polar residues. Basic and acidic residues predominate over residues 231–246 (RAAEDENDAKVEGDRR). Over residues 247 to 261 (SRTRGGKATKQKKGN) the composition is skewed to basic residues. Positions 262–275 (KLSESKADREEARA) are enriched in basic and acidic residues. The region spanning 383-552 (HRAPVVTIMG…LLQAEVLELK (170 aa)) is the tr-type G domain. The tract at residues 392–399 (GHVDHGKT) is G1. 392–399 (GHVDHGKT) is a binding site for GTP. Positions 417–421 (GITQH) are G2. The segment at 438–441 (DTPG) is G3. GTP contacts are provided by residues 438-442 (DTPGH) and 492-495 (NKID). The segment at 492-495 (NKID) is G4. A G5 region spans residues 528–530 (SAK).

It belongs to the TRAFAC class translation factor GTPase superfamily. Classic translation factor GTPase family. IF-2 subfamily.

The protein resides in the cytoplasm. Functionally, one of the essential components for the initiation of protein synthesis. Protects formylmethionyl-tRNA from spontaneous hydrolysis and promotes its binding to the 30S ribosomal subunits. Also involved in the hydrolysis of GTP during the formation of the 70S ribosomal complex. The chain is Translation initiation factor IF-2 from Yersinia pestis bv. Antiqua (strain Antiqua).